The chain runs to 148 residues: uncharacterized protein (148 aa).

The signal sequence occupies residues 1–35; it reads MRCVTRTRNWWRRAARMPRAGSSAWWVAVCKQVCT.

The protein resides in the secreted. This is an uncharacterized protein from Homo sapiens (Human).